Reading from the N-terminus, the 3722-residue chain is MSGMQWSFGFSCLFFLKTVWICQAFDADTPDPRVLSLDLTLVCSDDKSKQATLISYPVTFKGHVIKDMQIFCKNGWMQMTRGRGINMIRIHYPQTYTSVVPGACVFRGPYSVPTNDSIEMYNVSVALLWSDGTPTYESLECNVTKSQASNAPEPKASPTSSTPQPEAASHNQSKLIDWDVFCSQNENIPAKFISRLVAPKCLAVEKMDVDCSNGLVPITHEHGFNMMLIQYTRNKLLDSPGMCVFWGPYSVPKNDTVVLYTVTARLKWSEGPPTDLSIQCYMPKSPDAPKPESCLSSPPEPEASPSSNAPEPETYPTSSAPEKVSSDQPAPSHNQSKLIDWDVYCSQDESIPAKFISRLVTSKDQALEKTEINCSNGLVPITQEFGINMMLIQYTRNELLDSPGMCVFWGPYSVPKNDTVVLYTVTARLKWSEGPPTNLSIQCYMPKSPVAPKPETGPTSNAPEPETYPTSSAPEKVSSDQPAPSHNQSKLIDWDVYCSQNESIPAKFISRLVTSKDQALEKTEINCSNGLVPITQEFGINMMLIQYTRNELLDSPGMCVFWGPYSVPKNDTVVLYTVTARLKWSEGPPTNLSIECYMPKSPVAPKPETGPTSNAPEPETYPTSSAPEKVSSDQPAPSHNQSKLIDWDVYCSQNESIPAKFISRLVTSKDQALEKTEINCSNGLVPITQEFGINMMLIQYTRNELLDSPGMCVFWGPYSVPKNDTVVLYTVTARLKWSEGPPTNLSIECYMPKSPVAPKPETGPSSNAPEPETYPTSSAPEKVSSDQPAPSHNQSKLIDWDVYCSQNESIPAKFISRLVTSKDQALEKTEINCSNGLVPITQEFGINMMLIQYTRNELLDSPGMCVFWGPYSVPKNDTVVLYTVTARLKWSEGPPTNLSIECYMPKSPVAPKPETGPTSNAPEPETYPTSSAPEKVSSDQPAPSHNQSKLIDWDVYCSQNESIPAKFISRLVTSKDQALEKTEINCSNGLVPITHEFGINMMLIQYTRNELLDSPGMCVFWGPYSVPKNDTVVLYTVTARLKWSEGPPTNLSIECYMPKSPVAPKPETGPTSNAPEPETYPTSSAPEKVSSDQPAPSHNQSKLIDWDVYCSQNESIPAKFISRLVTSKDQALEKTEINCSNGLVPITQEFGINMMLIQYTRNELLDSPGMCVFWGPYSVPKNDTVVLYTVTARLKWSEGPPTNLSIECYMPKSPVAPKPETGPTSNAPEPETYPTSSAPEKVSSDQPAPSHNQSKLIDWDVYCSQNESIPAKFISRLVTSKDQALEKTEINCSNGLVPITHKFGINMMLIQYTRNELLDSPGMCVFWGPYSVPKNDTVVLYTVTARLKWSEGPPTNLSIECYMPKSPVAHKPETGPTSNAPEPETYPTSSAPEKVSSDQPAPSHNQSKLIDWDVYCSQNESIPAKFISLVTSKDQALEKTEINCSNGLVPITHEFGINMMLIQYTRNELLDSPGMCVFWGPYSVPKNDTVVLYTVTARLKWSEGPPTNLPIECYMPKSPVAPKPETGPSSNAPEPETYPTSSAPEKVYSDQPAPSHNQSKLIDWDVYCSQNESIPAKFISRLVTSKDQALEKTEINCSNGLVPITHEFGINMMLIQYTRNELLDSPGMCVFWGPYSVPKNDTVVLYTVTARLKWSEGPPTNLSIECYMPKSPVAPKPETGPTSNAPEPQTYPTSSAPEKVSSDQPAPSHNQSKLIDWDVYCSQNESIPAKFISRLVTSKDQALEKTEINCSNGLVPITQEFGINMMLIQYTRNELLDSPGMCVFWGPYSVPKNDTVVLYTVTARLKWSEGPPTNLSIECYMPKSPVAPKPETGPTSNAPEPETYPTSSAPEKVSSDQPAPSHNQSKLIDWDVYCSQNESIPAKFISRLVTSKDQALEKTEINCSNGLVPITHEFGINMMLIQYTRNELLDSPGMCVFWGPYSVPKNDTVVLYTVTARLKWSEGPPTNLSIECYMPKSPVAPKPETGPTSNAPEPETYPTSSAPEKVSSDQPAPSHNQSKLIDWDVYCSQNESFPAKFISRLVTSKDQALEKTEINCSNGLVPITQEFGINMMLIQYTRNELLDSPGMCVFWGPYSVPKNDTVVLYTVTARLKWSEGPPTNLSIECYMPKSPVAPKPETGPTSNAPEPETYPTSSAPEKVSSDQPAPSHNQSKLIDWDVYCSQNESIPAKFISRLVTSKDQALEKTEINCSNGLVPITQEFGINMMLIQYTRNELLDSPGMCVFWGPYSVPKNDTVVLYTVTARLKWSEGPPTNLSIECYMPKSPVAPKPETGPTSNAPEPETYPTSSAPEKVSSDQPAPSHNQSKLIDWDVYCSQNESIPAKFISRLVTSKDQALEKTEINCSNGLVPITQEFGINMMLIQYTRNELLDSPGMCVFWGPYSVPKNDTVVLYTVTARLKWSEGPPTNLSIECYMPKSPVAPKPETGPTSNAPEPETYPTSSAPEKVSSDQPAPSHNQSKLIDWDVYCSQNESFPAKFISRLVTSKDQALEKTEINCSNGLVPITQEFGINMMLIQYTRNELLDSPGMCVFWGPYSVPKNDTVVLYTVTARLKWSEGPPTNLSIECYMPKSPVAPKPETGPTSNAPEPQTYPTSSAPEKVSSDQPAPSHNQSKLIDWDVYCSQNESIPAKFISRLVTSKDQALEKTEINCSNGLVPITQEFGINMMLIQYTRNELLDSPGMCVFWGPYSVPKNDTVVLYTVTARLKWSEGPPTNLSIECYMPKSPVAPKPETGPTSNAPEPETYPTSSAPEKVSSDQPAPSHNQSKLIDWDVYCSQNESFPAKFISRLVTSKDQALEKTEINCSNGLVPITHEFGINMMLIQYTRNELLDSPGMCVFWGPYSVPKNDTVVLYTVTARLKWSEGPPTNLSIECYMPKSPVAPKPETGPTSNAPEPQTYPTSSAPEKVSSDQPAPSHNQSKLIDWDVYCSQNESFPAKFISRLVTSKDQALEKTEINCSNGLVPITQEFGINMMLIQYTRNELLDSPGMCVFWGPYSVPKNDTVVLYTVTARLKWSEGPPTNLSIECYMPKSPVAPKPETGPTSNAPEPETYPTSSAPEKVSSDQPAPSHNQSKLIDWDVYCSQNESIPAKFISRLVTSKDQALEKTEINCSNGLVPITQEFGINMMLIQYTRNELLDSPGMCVFWGPYSVPKNDTVVLYTVTARLKWSEGPPTNLSIECYMPKSPVAPKPETYPTSSAPEKVSSDQPAPSHNQSKLIDWDVYCSQNESIPAKFISRLVTSKDQALEKTEINCSNGLVPITHEFGINMMLIQYTRNELLDSPGMCVFWGPYSVPKNDTVVLYTVTARLKWSEGPPTNLSIECYMPKSPVAPKPEASPTSNAPEPQTYPTSSAPGTSPEGSATAAPGTSPEGNTTAARNAYPRKSNQTTSTEDVLDDTSNYIIKVIPHCRTRGDVALIEIITDVDLSAVAVCSNGSRHHFNSTDFVHFYLPVSYNFTPSVCAFTRSKANLFKLHIGVSWKDRLHDVTTQKKDFLITCTFDPHKSHRGPTSASSEPLIAAKEIQSHQGPQSDAEEVFLKLVDIRNETLAAAVPLSKKVRLVGEVHGSSLESGLKPVACDAVGVQQGQRYTILRDGCGDGIVFAKDIGFITEGNKAFSPVFEVFKLHGNLHLTFMCNFTLCSHSCDGSSCSNQRRTRRSMAWQDIPHVADFDSSATPSTDMATVQVALLVAVALLITQLAGLAIYVNIN.

Positions 1 to 24 are cleaved as a signal peptide; that stretch reads MSGMQWSFGFSCLFFLKTVWICQA. At 25 to 3698 the chain is on the extracellular side; that stretch reads FDADTPDPRV…TPSTDMATVQ (3674 aa). 2 disulfides stabilise this stretch: cysteine 43–cysteine 141 and cysteine 72–cysteine 104. The VERL 1 repeat unit spans residues 77 to 155; that stretch reads MQMTRGRGIN…SQASNAPEPK (79 aa). Asparagine 115, asparagine 122, and asparagine 142 each carry an N-linked (GlcNAc...) asparagine glycan. Residues 146–169 form a disordered region; sequence SQASNAPEPKASPTSSTPQPEAAS. A compositionally biased stretch (polar residues) spans 157–169; it reads SPTSSTPQPEAAS. N-linked (GlcNAc...) asparagine glycosylation is present at asparagine 171. 2 disulfides stabilise this stretch: cysteine 182/cysteine 280 and cysteine 211/cysteine 243. A VERL 2 repeat occupies 216-293; sequence VPITHEHGFN…KSPDAPKPES (78 aa). Residue asparagine 254 is glycosylated (N-linked (GlcNAc...) asparagine). The tract at residues 279–335 is disordered; sequence QCYMPKSPDAPKPESCLSSPPEPEASPSSNAPEPETYPTSSAPEKVSSDQPAPSHNQ. Residues 291-312 show a composition bias toward low complexity; that stretch reads PESCLSSPPEPEASPSSNAPEP. The span at 315–335 shows a compositional bias: polar residues; sequence YPTSSAPEKVSSDQPAPSHNQ. 2 N-linked (GlcNAc...) asparagine glycosylation sites follow: asparagine 334 and asparagine 373. Cystine bridges form between cysteine 345–cysteine 443 and cysteine 374–cysteine 406. The VERL 3 repeat unit spans residues 379–455; sequence VPITQEFGIN…PKSPVAPKPE (77 aa). Asparagine 417, asparagine 438, asparagine 487, asparagine 501, asparagine 526, asparagine 570, asparagine 591, asparagine 640, asparagine 654, asparagine 679, asparagine 723, asparagine 744, asparagine 793, asparagine 807, asparagine 832, asparagine 876, asparagine 897, asparagine 946, asparagine 960, asparagine 985, asparagine 1029, asparagine 1050, asparagine 1099, asparagine 1113, asparagine 1138, asparagine 1182, asparagine 1203, asparagine 1252, asparagine 1266, asparagine 1291, asparagine 1335, asparagine 1356, asparagine 1405, asparagine 1419, asparagine 1443, and asparagine 1487 each carry an N-linked (GlcNAc...) asparagine glycan. Residues 443–488 are disordered; the sequence is CYMPKSPVAPKPETGPTSNAPEPETYPTSSAPEKVSSDQPAPSHNQ. Positions 457–488 are enriched in polar residues; the sequence is GPTSNAPEPETYPTSSAPEKVSSDQPAPSHNQ. The stretch at 532–608 is one VERL 4 repeat; the sequence is VPITQEFGIN…PKSPVAPKPE (77 aa). Residues 603–641 are disordered; it reads VAPKPETGPTSNAPEPETYPTSSAPEKVSSDQPAPSHNQ. The segment covering 610 to 641 has biased composition (polar residues); it reads GPTSNAPEPETYPTSSAPEKVSSDQPAPSHNQ. A VERL 5 repeat occupies 685-761; sequence VPITQEFGIN…PKSPVAPKPE (77 aa). Residues 756–794 form a disordered region; sequence VAPKPETGPSSNAPEPETYPTSSAPEKVSSDQPAPSHNQ. Residues 763-794 show a composition bias toward polar residues; sequence GPSSNAPEPETYPTSSAPEKVSSDQPAPSHNQ. One copy of the VERL 6 repeat lies at 838 to 914; it reads VPITQEFGIN…PKSPVAPKPE (77 aa). The disordered stretch occupies residues 909-947; it reads VAPKPETGPTSNAPEPETYPTSSAPEKVSSDQPAPSHNQ. Positions 916–947 are enriched in polar residues; sequence GPTSNAPEPETYPTSSAPEKVSSDQPAPSHNQ. One copy of the VERL 7 repeat lies at 991–1067; the sequence is VPITHEFGIN…PKSPVAPKPE (77 aa). A disordered region spans residues 1062–1100; that stretch reads VAPKPETGPTSNAPEPETYPTSSAPEKVSSDQPAPSHNQ. The span at 1069 to 1100 shows a compositional bias: polar residues; the sequence is GPTSNAPEPETYPTSSAPEKVSSDQPAPSHNQ. A VERL 8 repeat occupies 1144 to 1220; it reads VPITQEFGIN…PKSPVAPKPE (77 aa). The segment at 1215 to 1253 is disordered; sequence VAPKPETGPTSNAPEPETYPTSSAPEKVSSDQPAPSHNQ. A compositionally biased stretch (polar residues) spans 1222–1253; that stretch reads GPTSNAPEPETYPTSSAPEKVSSDQPAPSHNQ. A VERL 9 repeat occupies 1297–1373; that stretch reads VPITHKFGIN…PKSPVAHKPE (77 aa). The disordered stretch occupies residues 1368–1406; it reads VAHKPETGPTSNAPEPETYPTSSAPEKVSSDQPAPSHNQ. Residues 1375–1406 are compositionally biased toward polar residues; sequence GPTSNAPEPETYPTSSAPEKVSSDQPAPSHNQ. A VERL 10 repeat occupies 1449-1525; it reads VPITHEFGIN…PKSPVAPKPE (77 aa). The interval 1519-1556 is disordered; sequence PVAPKPETGPSSNAPEPETYPTSSAPEKVYSDQPAPSH. A compositionally biased stretch (polar residues) spans 1527–1543; the sequence is GPSSNAPEPETYPTSSA. Asparagine 1557, asparagine 1571, asparagine 1596, asparagine 1640, asparagine 1661, asparagine 1710, asparagine 1724, asparagine 1749, asparagine 1793, asparagine 1814, asparagine 1863, asparagine 1877, asparagine 1902, asparagine 1946, asparagine 1967, asparagine 2016, asparagine 2030, asparagine 2055, asparagine 2099, asparagine 2120, asparagine 2169, asparagine 2183, asparagine 2208, asparagine 2252, asparagine 2273, asparagine 2322, asparagine 2336, asparagine 2361, asparagine 2405, asparagine 2426, asparagine 2475, asparagine 2489, asparagine 2514, asparagine 2558, asparagine 2579, asparagine 2628, asparagine 2642, asparagine 2667, asparagine 2711, asparagine 2732, asparagine 2781, asparagine 2795, asparagine 2820, asparagine 2864, asparagine 2885, asparagine 2934, asparagine 2948, asparagine 2973, asparagine 3017, asparagine 3038, asparagine 3087, asparagine 3101, asparagine 3126, asparagine 3170, asparagine 3191, asparagine 3229, asparagine 3243, asparagine 3268, asparagine 3312, and asparagine 3333 each carry an N-linked (GlcNAc...) asparagine glycan. Residues 1602–1678 form a VERL 11 repeat; that stretch reads VPITHEFGIN…PKSPVAPKPE (77 aa). A disordered region spans residues 1672 to 1711; sequence PVAPKPETGPTSNAPEPQTYPTSSAPEKVSSDQPAPSHNQ. The segment covering 1680 to 1711 has biased composition (polar residues); the sequence is GPTSNAPEPQTYPTSSAPEKVSSDQPAPSHNQ. The stretch at 1755–1831 is one VERL 12 repeat; that stretch reads VPITQEFGIN…PKSPVAPKPE (77 aa). The disordered stretch occupies residues 1826–1864; that stretch reads VAPKPETGPTSNAPEPETYPTSSAPEKVSSDQPAPSHNQ. Positions 1833–1864 are enriched in polar residues; sequence GPTSNAPEPETYPTSSAPEKVSSDQPAPSHNQ. One copy of the VERL 13 repeat lies at 1908 to 1984; that stretch reads VPITHEFGIN…PKSPVAPKPE (77 aa). The segment at 1979–2017 is disordered; that stretch reads VAPKPETGPTSNAPEPETYPTSSAPEKVSSDQPAPSHNQ. The span at 1986-2017 shows a compositional bias: polar residues; the sequence is GPTSNAPEPETYPTSSAPEKVSSDQPAPSHNQ. Residues 2061–2137 form a VERL 14 repeat; sequence VPITQEFGIN…PKSPVAPKPE (77 aa). The disordered stretch occupies residues 2132-2170; sequence VAPKPETGPTSNAPEPETYPTSSAPEKVSSDQPAPSHNQ. Positions 2139–2170 are enriched in polar residues; the sequence is GPTSNAPEPETYPTSSAPEKVSSDQPAPSHNQ. A VERL 15 repeat occupies 2214–2290; sequence VPITQEFGIN…PKSPVAPKPE (77 aa). Residues 2285–2323 form a disordered region; that stretch reads VAPKPETGPTSNAPEPETYPTSSAPEKVSSDQPAPSHNQ. Residues 2292-2323 show a composition bias toward polar residues; the sequence is GPTSNAPEPETYPTSSAPEKVSSDQPAPSHNQ. The VERL 16 repeat unit spans residues 2367-2443; it reads VPITQEFGIN…PKSPVAPKPE (77 aa). Residues 2438–2476 form a disordered region; sequence VAPKPETGPTSNAPEPETYPTSSAPEKVSSDQPAPSHNQ. Over residues 2445–2476 the composition is skewed to polar residues; sequence GPTSNAPEPETYPTSSAPEKVSSDQPAPSHNQ. A VERL 17 repeat occupies 2520–2596; sequence VPITQEFGIN…PKSPVAPKPE (77 aa). The segment at 2590 to 2629 is disordered; sequence PVAPKPETGPTSNAPEPQTYPTSSAPEKVSSDQPAPSHNQ. A compositionally biased stretch (polar residues) spans 2598 to 2629; sequence GPTSNAPEPQTYPTSSAPEKVSSDQPAPSHNQ. The VERL 18 repeat unit spans residues 2673–2749; it reads VPITQEFGIN…PKSPVAPKPE (77 aa). A disordered region spans residues 2744–2782; that stretch reads VAPKPETGPTSNAPEPETYPTSSAPEKVSSDQPAPSHNQ. Residues 2751 to 2782 are compositionally biased toward polar residues; that stretch reads GPTSNAPEPETYPTSSAPEKVSSDQPAPSHNQ. The stretch at 2826–2902 is one VERL 19 repeat; sequence VPITHEFGIN…PKSPVAPKPE (77 aa). A disordered region spans residues 2897-2935; the sequence is VAPKPETGPTSNAPEPQTYPTSSAPEKVSSDQPAPSHNQ. Polar residues predominate over residues 2904–2935; it reads GPTSNAPEPQTYPTSSAPEKVSSDQPAPSHNQ. Residues 2979–3055 form a VERL 20 repeat; that stretch reads VPITQEFGIN…PKSPVAPKPE (77 aa). Residues 3050–3088 are disordered; that stretch reads VAPKPETGPTSNAPEPETYPTSSAPEKVSSDQPAPSHNQ. The span at 3057 to 3088 shows a compositional bias: polar residues; that stretch reads GPTSNAPEPETYPTSSAPEKVSSDQPAPSHNQ. The stretch at 3132–3208 is one VERL 21 repeat; sequence VPITQEFGIN…PKSPVAPKPE (77 aa). The disordered stretch occupies residues 3205-3230; the sequence is PKPETYPTSSAPEKVSSDQPAPSHNQ. A compositionally biased stretch (polar residues) spans 3210-3230; the sequence is YPTSSAPEKVSSDQPAPSHNQ. One copy of the VERL 22 repeat lies at 3274 to 3351; the sequence is VPITHEFGIN…KSPVAPKPEA (78 aa). The interval 3345-3407 is disordered; sequence VAPKPEASPT…RKSNQTTSTE (63 aa). Residues 3352 to 3375 show a composition bias toward polar residues; it reads SPTSNAPEPQTYPTSSAPGTSPEG. Asparagine 3388, asparagine 3401, asparagine 3449, asparagine 3456, asparagine 3559, and asparagine 3650 each carry an N-linked (GlcNAc...) asparagine glycan. One can recognise a ZP domain in the interval 3408-3670; it reads DVLDDTSNYI…SSCSNQRRTR (263 aa). A helical membrane pass occupies residues 3699–3719; it reads VALLVAVALLITQLAGLAIYV. Topologically, residues 3720 to 3722 are cytoplasmic; it reads NIN.

May form disulfide-linked homodimers. Interacts (via VERL repeats) with sperm lysin. Each VERL chain can bind numerous lysin molecules. N-glycosylated. About half of the glycoprotein mass corresponds to carbohydrate chains. N-glycosylation is not required for lysin binding. In terms of processing, O-glycosylated. O-glycosylation is not required for lysin binding.

The protein resides in the cell membrane. Its subcellular location is the secreted. It localises to the extracellular space. The protein localises to the extracellular matrix. Functionally, structural component of the egg vitelline envelope; forms long filaments. Functions as a species-specific receptor for the sperm protein lysin; prevents fertilization by sperm from other species. Each VERL chain can bind multiple copies of the sperm protein lysin; this creates a 3 um hole in the egg vitelline envelope through which the sperm passes. The polypeptide is Vitelline envelope sperm lysin receptor (Haliotis rufescens (California red abalone)).